The following is a 446-amino-acid chain: Tubulin beta-1 chain (446 aa).

Residues Gln13, Glu71, Ser140, Gly144, Thr145, Gly146, Asn206, and Asn228 each contribute to the GTP site. Position 71 (Glu71) interacts with Mg(2+). Residues 421–446 (VSEYQQYQDASADDGEEYEEDAPMEE) are disordered. Positions 431-446 (SADDGEEYEEDAPMEE) are enriched in acidic residues.

The protein belongs to the tubulin family. As to quaternary structure, dimer of alpha and beta chains. A typical microtubule is a hollow water-filled tube with an outer diameter of 25 nm and an inner diameter of 15 nM. Alpha-beta heterodimers associate head-to-tail to form protofilaments running lengthwise along the microtubule wall with the beta-tubulin subunit facing the microtubule plus end conferring a structural polarity. Microtubules usually have 13 protofilaments but different protofilament numbers can be found in some organisms and specialized cells. Mg(2+) serves as cofactor.

The protein resides in the cytoplasm. The protein localises to the cytoskeleton. Tubulin is the major constituent of microtubules, a cylinder consisting of laterally associated linear protofilaments composed of alpha- and beta-tubulin heterodimers. Microtubules grow by the addition of GTP-tubulin dimers to the microtubule end, where a stabilizing cap forms. Below the cap, tubulin dimers are in GDP-bound state, owing to GTPase activity of alpha-tubulin. The polypeptide is Tubulin beta-1 chain (tub1) (Hypocrea rufa (Trichoderma viride)).